The following is a 701-amino-acid chain: Polyribonucleotide nucleotidyltransferase (701 aa).

2 residues coordinate Mg(2+): Asp487 and Asp493. One can recognise a KH domain in the interval 554 to 613 (PTMIAMKIDTDKIRDVIGKGGATIRAICEETKASIDIEDDGSIKIFGESKEAAEAARQRV). In terms of domain architecture, S1 motif spans 623–691 (GKIYLGKVER…NRGRIKLSIK (69 aa)).

Belongs to the polyribonucleotide nucleotidyltransferase family. In terms of assembly, component of the RNA degradosome, which is a multiprotein complex involved in RNA processing and mRNA degradation. Requires Mg(2+) as cofactor.

It localises to the cytoplasm. It carries out the reaction RNA(n+1) + phosphate = RNA(n) + a ribonucleoside 5'-diphosphate. In terms of biological role, involved in mRNA degradation. Catalyzes the phosphorolysis of single-stranded polyribonucleotides processively in the 3'- to 5'-direction. The protein is Polyribonucleotide nucleotidyltransferase of Pseudomonas syringae pv. tomato (strain ATCC BAA-871 / DC3000).